A 445-amino-acid polypeptide reads, in one-letter code: Xylose isomerase (445 aa).

Residues H109 and D112 contribute to the active site. The Mg(2+) site is built by E240, E276, H279, D304, D315, D317, and D347.

The protein belongs to the xylose isomerase family. As to quaternary structure, homotetramer. Mg(2+) serves as cofactor.

The protein resides in the cytoplasm. It catalyses the reaction alpha-D-xylose = alpha-D-xylulofuranose. In Xanthomonas oryzae pv. oryzae (strain MAFF 311018), this protein is Xylose isomerase.